The sequence spans 122 residues: Large ribosomal subunit protein uL14 (122 aa).

Belongs to the universal ribosomal protein uL14 family. In terms of assembly, part of the 50S ribosomal subunit. Forms a cluster with proteins L3 and L19. In the 70S ribosome, L14 and L19 interact and together make contacts with the 16S rRNA in bridges B5 and B8.

Its function is as follows. Binds to 23S rRNA. Forms part of two intersubunit bridges in the 70S ribosome. In Myxococcus xanthus (strain DK1622), this protein is Large ribosomal subunit protein uL14.